The sequence spans 202 residues: Ribosomal RNA small subunit methyltransferase G (202 aa).

Residues Gly75, Phe80, Val125 to Gln126, and Arg139 each bind S-adenosyl-L-methionine.

This sequence belongs to the methyltransferase superfamily. RNA methyltransferase RsmG family.

It is found in the cytoplasm. Functionally, specifically methylates the N7 position of a guanine in 16S rRNA. This is Ribosomal RNA small subunit methyltransferase G from Mesomycoplasma hyopneumoniae (strain 7448) (Mycoplasma hyopneumoniae).